A 126-amino-acid polypeptide reads, in one-letter code: Large ribosomal subunit protein bL12 (126 aa).

Residues 97–126 (PQPVKSGVSKEEAEEAKKQLAESGAEVEVK) form a disordered region. Residues 104 to 116 (VSKEEAEEAKKQL) show a composition bias toward basic and acidic residues.

This sequence belongs to the bacterial ribosomal protein bL12 family. As to quaternary structure, homodimer. Part of the ribosomal stalk of the 50S ribosomal subunit. Forms a multimeric L10(L12)X complex, where L10 forms an elongated spine to which 2 to 4 L12 dimers bind in a sequential fashion. Binds GTP-bound translation factors.

Forms part of the ribosomal stalk which helps the ribosome interact with GTP-bound translation factors. Is thus essential for accurate translation. The polypeptide is Large ribosomal subunit protein bL12 (Geotalea uraniireducens (strain Rf4) (Geobacter uraniireducens)).